The sequence spans 400 residues: 3-phenylpropionate/cinnamic acid dioxygenase ferredoxin--NAD(+) reductase component (400 aa).

5–36 serves as a coordination point for FAD; the sequence is TIIIVGGGQAAAMAAASLRQQGFTGELHLFSD. An NAD(+)-binding site is contributed by 146–174; the sequence is SVVIVGAGTIGLELAASATQRRCKVTVIE.

Belongs to the bacterial ring-hydroxylating dioxygenase ferredoxin reductase family. As to quaternary structure, this dioxygenase system consists of four proteins: the two subunits of the hydroxylase component (HcaE and HcaF), a ferredoxin (HcaC) and a ferredoxin reductase (HcaD). Requires FAD as cofactor.

It carries out the reaction 2 reduced [2Fe-2S]-[ferredoxin] + NAD(+) + H(+) = 2 oxidized [2Fe-2S]-[ferredoxin] + NADH. Its pathway is aromatic compound metabolism; 3-phenylpropanoate degradation. Its function is as follows. Part of the multicomponent 3-phenylpropionate dioxygenase, that converts 3-phenylpropionic acid (PP) and cinnamic acid (CI) into 3-phenylpropionate-dihydrodiol (PP-dihydrodiol) and cinnamic acid-dihydrodiol (CI-dihydrodiol), respectively. The protein is 3-phenylpropionate/cinnamic acid dioxygenase ferredoxin--NAD(+) reductase component of Escherichia coli O157:H7.